The chain runs to 235 residues: Vinculin (235 aa).

This sequence belongs to the vinculin/alpha-catenin family. As to quaternary structure, exhibits self-association properties. Post-translationally, phosphorylated on serines, threonines and tyrosines. Acetylated by myristic acid and/or palmitic acid.

It localises to the cell membrane. It is found in the cell junction. Its subcellular location is the adherens junction. The protein localises to the focal adhesion. The protein resides in the cytoplasm. It localises to the cytoskeleton. It is found in the sarcolemma. Its subcellular location is the cell projection. The protein localises to the podosome. Functionally, involved in cell adhesion. May be involved in the attachment of the actin-based microfilaments to the plasma membrane. The protein is Vinculin (vcl) of Xenopus laevis (African clawed frog).